Here is a 151-residue protein sequence, read N- to C-terminus: Deoxyuridine 5'-triphosphate nucleotidohydrolase (151 aa).

Residues 70–72, Asn-83, 87–89, and Met-97 each bind substrate; these read RSG and LID.

Belongs to the dUTPase family. Mg(2+) serves as cofactor.

It catalyses the reaction dUTP + H2O = dUMP + diphosphate + H(+). The protein operates within pyrimidine metabolism; dUMP biosynthesis; dUMP from dCTP (dUTP route): step 2/2. In terms of biological role, this enzyme is involved in nucleotide metabolism: it produces dUMP, the immediate precursor of thymidine nucleotides and it decreases the intracellular concentration of dUTP so that uracil cannot be incorporated into DNA. This is Deoxyuridine 5'-triphosphate nucleotidohydrolase from Shigella flexneri serotype 5b (strain 8401).